A 261-amino-acid polypeptide reads, in one-letter code: Small ribosomal subunit protein eS1 (261 aa).

Residues M1–K18 show a composition bias toward basic residues. The segment at M1–T21 is disordered.

It belongs to the eukaryotic ribosomal protein eS1 family. Component of the small ribosomal subunit. Mature ribosomes consist of a small (40S) and a large (60S) subunit. The 40S subunit contains about 33 different proteins and 1 molecule of RNA (18S). The 60S subunit contains about 49 different proteins and 3 molecules of RNA (25S, 5.8S and 5S).

The protein localises to the cytoplasm. The protein is Small ribosomal subunit protein eS1 (cyc07) of Daucus carota (Wild carrot).